The sequence spans 489 residues: Ribulose bisphosphate carboxylase large chain (489 aa).

Substrate-binding residues include asparagine 128 and threonine 178. Catalysis depends on lysine 180, which acts as the Proton acceptor. Residue lysine 182 participates in substrate binding. Mg(2+) contacts are provided by lysine 206, aspartate 208, and glutamate 209. N6-carboxylysine is present on lysine 206. Histidine 298 serves as the catalytic Proton acceptor. Residues arginine 299, histidine 331, and serine 383 each contribute to the substrate site.

The protein belongs to the RuBisCO large chain family. Type I subfamily. As to quaternary structure, heterohexadecamer of 8 large chains and 8 small chains. It depends on Mg(2+) as a cofactor.

It carries out the reaction 2 (2R)-3-phosphoglycerate + 2 H(+) = D-ribulose 1,5-bisphosphate + CO2 + H2O. The catalysed reaction is D-ribulose 1,5-bisphosphate + O2 = 2-phosphoglycolate + (2R)-3-phosphoglycerate + 2 H(+). Functionally, ruBisCO catalyzes two reactions: the carboxylation of D-ribulose 1,5-bisphosphate, the primary event in carbon dioxide fixation, as well as the oxidative fragmentation of the pentose substrate. Both reactions occur simultaneously and in competition at the same active site. The protein is Ribulose bisphosphate carboxylase large chain of Nitrosospira sp. (strain 40KI).